Reading from the N-terminus, the 210-residue chain is Uracil phosphoribosyltransferase (210 aa).

5-phospho-alpha-D-ribose 1-diphosphate-binding positions include Arg-78, Arg-103, and 130–138; that span reads DPMLATGGT. Uracil is bound by residues Ile-193 and 198-200; that span reads GDA. Position 199 (Asp-199) interacts with 5-phospho-alpha-D-ribose 1-diphosphate.

It belongs to the UPRTase family. Mg(2+) serves as cofactor.

It carries out the reaction UMP + diphosphate = 5-phospho-alpha-D-ribose 1-diphosphate + uracil. It functions in the pathway pyrimidine metabolism; UMP biosynthesis via salvage pathway; UMP from uracil: step 1/1. Allosterically activated by GTP. In terms of biological role, catalyzes the conversion of uracil and 5-phospho-alpha-D-ribose 1-diphosphate (PRPP) to UMP and diphosphate. In Stenotrophomonas maltophilia (strain K279a), this protein is Uracil phosphoribosyltransferase.